Here is a 91-residue protein sequence, read N- to C-terminus: UPF0298 protein OB1449 (91 aa).

It belongs to the UPF0298 family.

The protein resides in the cytoplasm. This is UPF0298 protein OB1449 from Oceanobacillus iheyensis (strain DSM 14371 / CIP 107618 / JCM 11309 / KCTC 3954 / HTE831).